The chain runs to 240 residues: Membrane-spanning 4-domains subfamily A member 15 (240 aa).

The next 4 membrane-spanning stretches (helical) occupy residues 73–93 (VLGT…SVLL), 100–120 (VGIF…FIIS), 144–164 (ILSV…FGVT), and 173–193 (LAVL…AMHF).

This sequence belongs to the MS4A family.

It is found in the membrane. Functionally, may be involved in signal transduction as a component of a multimeric receptor complex. The sequence is that of Membrane-spanning 4-domains subfamily A member 15 (MS4A15) from Homo sapiens (Human).